We begin with the raw amino-acid sequence, 249 residues long: MKYSLKTVMSLVDHSGLKPYLREDEIARLIGEASEMGNYSVCIEPIYGNFAVEYIKEKGYSLKVDVTLDFPFGSLPTSARKKIIEDSVYADEIDMVIPIGYVKSHRWDKVEQDINDVVSTARDLGLVSKIITEDGYLTLDEKLKTYDIVIRSAPDFIKTSTGFADKEFCKSLGNETGATPENVKLMSEIAKKIGSNIGIKAAGGIHTYDQVEKIIDSAGMIPEPSNIRLGMSGTKKLYEEMKKASVQQS.

D94 (proton donor/acceptor) is an active-site residue. K158 serves as the catalytic Schiff-base intermediate with acetaldehyde. The Proton donor/acceptor role is filled by K200.

The protein belongs to the DeoC/FbaB aldolase family. DeoC type 1 subfamily.

It localises to the cytoplasm. It carries out the reaction 2-deoxy-D-ribose 5-phosphate = D-glyceraldehyde 3-phosphate + acetaldehyde. It functions in the pathway carbohydrate degradation; 2-deoxy-D-ribose 1-phosphate degradation; D-glyceraldehyde 3-phosphate and acetaldehyde from 2-deoxy-alpha-D-ribose 1-phosphate: step 2/2. Functionally, catalyzes a reversible aldol reaction between acetaldehyde and D-glyceraldehyde 3-phosphate to generate 2-deoxy-D-ribose 5-phosphate. This Thermoplasma volcanium (strain ATCC 51530 / DSM 4299 / JCM 9571 / NBRC 15438 / GSS1) protein is Deoxyribose-phosphate aldolase.